The chain runs to 395 residues: uncharacterized protein (395 aa).

A run of 12 helical transmembrane segments spans residues 12-34 (LLAS…TIYL), 44-66 (LIGY…FGIL), 75-94 (YMLL…TLVN), 99-121 (VVLF…KAWF), 134-156 (FSIN…TLLV), 160-182 (INLP…QIWV), 208-230 (LLWF…SCIS), 245-264 (VVAV…QYSV), 271-293 (ANIR…GFIF), 298-320 (LLLW…PGEY), 341-360 (LGWL…LTSL), and 364-381 (SLFV…VLML).

This sequence belongs to the major facilitator superfamily.

Its subcellular location is the cell inner membrane. Functionally, a transporter able to export peptides. When overexpressed, allows cells deleted for multiple peptidases (pepA, pepB, pepD and pepN) to grow in the presence of dipeptides Ala-Gln or Gly-Tyr which otherwise inhibit growth. Cells overexpressing this protein have decreased intracellular levels of Ala-Gln dipeptide, and in a system that produces the Ala-Gln dipeptide overproduction of this protein increases export of the dipeptide. This is an uncharacterized protein from Escherichia coli (strain K12).